We begin with the raw amino-acid sequence, 1909 residues long: Plexin-B3 (1909 aa).

The N-terminal stretch at methionine 1–alanine 44 is a signal peptide. The 427-residue stretch at histidine 45–valine 471 folds into the Sema domain. Residues histidine 45–glutamine 1255 are Extracellular-facing. N-linked (GlcNAc...) asparagine glycosylation is present at asparagine 51. 2 disulfide bridges follow: cysteine 98-cysteine 107 and cysteine 132-cysteine 140. Residue asparagine 231 is glycosylated (N-linked (GlcNAc...) asparagine). 8 disulfide bridges follow: cysteine 267–cysteine 370, cysteine 283–cysteine 315, cysteine 333–cysteine 357, cysteine 474–cysteine 491, cysteine 480–cysteine 525, cysteine 483–cysteine 500, cysteine 494–cysteine 506, and cysteine 562–cysteine 580. The region spanning alanine 473–leucine 526 is the PSI 1 domain. An N-linked (GlcNAc...) asparagine glycan is attached at asparagine 615. PSI domains lie at aspartate 620–proline 682 and aspartate 787–proline 833. Asparagine 802, asparagine 900, asparagine 957, asparagine 1101, and asparagine 1218 each carry an N-linked (GlcNAc...) asparagine glycan. IPT/TIG domains are found at residues proline 835–glutamine 925, proline 927–threonine 1012, proline 1015–glutamine 1145, and alanine 1159–glutamate 1244. A helical membrane pass occupies residues alanine 1256–tyrosine 1276. Residues arginine 1277–leucine 1909 lie on the Cytoplasmic side of the membrane.

This sequence belongs to the plexin family. As to quaternary structure, interacts (via cytoplasmic domain) with RAC1 and ARHGDIA. Binds MET and MST1R. Interacts (via cytoplasmic domain) with FSCN1. Interacts with RIT2/RIN. May form homodimers (via Sema domain). In terms of tissue distribution, expression detected in Purkinje and granular cells in cerebellum, and in brain neocortex but not in corpus callosum. Expressed in glioma cells and embryonic kidney cells (at protein level). Expressed in brain, liver, pancreas and placenta, with weak expression detected also in lung and kidney. Expressed in several glioma cell lines.

The protein localises to the cell membrane. Its function is as follows. Receptor for SEMA5A that plays a role in axon guidance, invasive growth and cell migration. Stimulates neurite outgrowth and mediates Ca(2+)/Mg(2+)-dependent cell aggregation. In glioma cells, SEMA5A stimulation of PLXNB3 results in the disassembly of F-actin stress fibers, disruption of focal adhesions and cellular collapse as well as inhibition of cell migration and invasion through ARHGDIA-mediated inactivation of RAC1. The protein is Plexin-B3 (PLXNB3) of Homo sapiens (Human).